The chain runs to 134 residues: Protein PsiE homolog (134 aa).

The next 4 helical transmembrane spans lie at 14–34 (LQWI…IFLI), 56–76 (VESI…IKYF), 82–102 (FPLR…IIVS), and 106–126 (PMET…LYIS).

This sequence belongs to the PsiE family.

It localises to the cell membrane. The protein is Protein PsiE homolog of Bacillus anthracis.